A 284-amino-acid chain; its full sequence is uncharacterized protein (284 aa).

A Photolyase/cryptochrome alpha/beta domain is found at 4–133 (PLHLFWHRRD…AVHRQWDQLL (130 aa)).

This is an uncharacterized protein from Synechococcus sp. (strain PCC 6716).